The chain runs to 621 residues: F-box/LRR-repeat protein 4 (621 aa).

R28 is modified (asymmetric dimethylarginine). The F-box domain occupies 277–332; it reads NGYFDKLPYELIQLILNHLSLPDLCRLAQTCRLLHQHCCDPLQYIHLNLQPYWARL. 9 LRR repeats span residues 376–397, 402–421, 427–448, 452–474, 480–501, 504–524, 532–558, 559–583, and 584–609; these read ELVRLELSCSHFLNDTCLEVIS, NLQDLNLSSCDKLPPQAFGH, SLKRLVLYRTKVEQTALLSILN, ELQHLSLGSCVMIEDYDVIASMI, NLRTLDLWRCKNITENGIAELA, CVLLEELDLGWCPTLQSSTGC, LPNLQKLFLTANRSVCDTDIEELASNC, TRLQQLDILGTRMVSPASLRKLLES, and CKDLSLLDVSFCSQIDNKAVLELNAS.

Part of a SCF (SKP1-CUL1-F-box) protein ligase complex. Interacts with FAF2 and VCP. Interacts with PPTC7; this interaction promotes destruction of BNIP3 and NIX and mitophagy suppression.

The protein localises to the cytoplasm. The protein resides in the nucleus. It localises to the mitochondrion outer membrane. Functionally, substrate-recognition component of the mitochondria-localized SCF-FBXL4 ubiquitin E3 ligase complex that plays a role in the restriction of mitophagy by controlling the degradation of BNIP3 and NIX mitophagy receptors. Also rescues mitochondrial injury through reverting hyperactivation of DRP1-mediated mitochondrial fission. The chain is F-box/LRR-repeat protein 4 (Fbxl4) from Mus musculus (Mouse).